A 246-amino-acid chain; its full sequence is Pyrroloquinoline-quinone synthase (246 aa).

This sequence belongs to the PqqC family.

The catalysed reaction is 6-(2-amino-2-carboxyethyl)-7,8-dioxo-1,2,3,4,7,8-hexahydroquinoline-2,4-dicarboxylate + 3 O2 = pyrroloquinoline quinone + 2 H2O2 + 2 H2O + H(+). Its pathway is cofactor biosynthesis; pyrroloquinoline quinone biosynthesis. Functionally, ring cyclization and eight-electron oxidation of 3a-(2-amino-2-carboxyethyl)-4,5-dioxo-4,5,6,7,8,9-hexahydroquinoline-7,9-dicarboxylic-acid to PQQ. The polypeptide is Pyrroloquinoline-quinone synthase (Acidiphilium cryptum (strain JF-5)).